A 348-amino-acid chain; its full sequence is MDSDHNHINGDLAHGFENMVCVRCNDGFSMQDQMVNSSGQVWHSECFVCAQCFEPFPDGIYFEYEGRKYCEHDFHVLFSPCCGKCNEFIVGRVIKAMNASWHPGCFCCEICNKQLADVGFLRNAGRALCRECNEREKAAGHGRYVCHKCHAMIDDGQHIKFRGDSFHPYHFKCKRCNNELTTASREVNGELYCLRCHDTMGIPICGACHRPIEERVIAALGKHWHVEHFVCSVCEKPFLGHRHYERKGLPYCEQHFHKLFGNLCFKCGDPCCGEVFQALQKTWCVKCFSCSFCDKKLDQKTKFYEFDMKPTCKRCYDRFPTELKKRISESLKDRDVENQRRSMSPGPK.

LIM zinc-binding domains are found at residues 21-73 (CVRC…CEHD), 82-132 (CGKC…CREC), 146-196 (CHKC…CLRC), 205-255 (CGAC…CEQH), and 264-315 (CFKC…CKRC).

As to quaternary structure, interacts with unc-98. Component of an integrin containing attachment complex, composed of at least pat-2, pat-3, pat-4, pat-6, unc-52, unc-97 and unc-112. As to expression, restricted to tissue types that attach to the hypodermis, specifically body wall muscles, vulval muscles, and mechanosensory neurons.

It is found in the cell junction. Its subcellular location is the adherens junction. The protein localises to the nucleus. Component of an integrin containing attachment complex, which is required for muscle development and maintenance. Probably function in adherens junction. Affects the structural integrity of the integrin containing muscle adherens junctions and contributes to the mechanosensory functions of touch neurons. The sequence is that of LIM domain-containing protein unc-97 from Caenorhabditis elegans.